The sequence spans 566 residues: Zinc finger protein 704 (566 aa).

3 disordered regions span residues 1-148, 166-203, and 253-324; these read MQAR…ARGA, DFRRDSSKKPSHHLFPLAMEEDVRTADTKKTSRVLDQE, and PLVR…DEAD. Low complexity predominate over residues 12–31; the sequence is LGSRRGGAAPAPAPEAAALG. Positions 32–55 are enriched in pro residues; it reads LPPPGPSPAAAPGSWRPPLPPPRG. A compositionally biased stretch (low complexity) spans 56–72; sequence TGPSRAAAASSPVLLLL. The segment covering 91-100 has biased composition (basic and acidic residues); sequence RVTEKPRGVA. Acidic residues predominate over residues 101-128; the sequence is EEEDDDEEEDEEVVVEVVDGDEDDEDAE. Residues 186 to 203 are compositionally biased toward basic and acidic residues; the sequence is EDVRTADTKKTSRVLDQE. A compositionally biased stretch (low complexity) spans 267–290; it reads SGSWKEGAPSSSSSSGYWSWSAPS. A C2H2-type zinc finger spans residues 346–371; that stretch reads FKCLWKSCGKVLNTAAGIQKHIRAVH. Phosphoserine occurs at positions 378 and 381. 2 disordered regions span residues 409–436 and 497–535; these read VSPSQSLASAPAFPIPDSSRTETPCAKT and PVSPPHHPTAGSGEQRQHAHTALSSPPRGTVTLRKPRGE. A sufficient for binding to RE2 sequence motifs region spans residues 471–566; sequence GSAKFTPNGS…WKKACQRFID (96 aa). Positions 537 to 541 match the CR1 motif; the sequence is KKCRK. The short motif at 555-559 is the CR2 element; it reads CRWKK.

The protein localises to the nucleus. Transcription factor which binds to RE2 sequence elements in the MYOD1 enhancer. The chain is Zinc finger protein 704 from Mus musculus (Mouse).